Here is a 320-residue protein sequence, read N- to C-terminus: Lipoyl synthase (320 aa).

The segment at 1–28 is disordered; the sequence is MVTVVDRVTDRRLRHPEKAHRPDTSVQK. The segment covering 19–28 has biased composition (basic and acidic residues); that stretch reads AHRPDTSVQK. [4Fe-4S] cluster contacts are provided by Cys59, Cys64, Cys70, Cys85, Cys89, Cys92, and Ser298. The Radical SAM core domain occupies 71-287; sequence WSQRHASFMI…AKIGKVKGFL (217 aa).

The protein belongs to the radical SAM superfamily. Lipoyl synthase family. It depends on [4Fe-4S] cluster as a cofactor.

It is found in the cytoplasm. It carries out the reaction [[Fe-S] cluster scaffold protein carrying a second [4Fe-4S](2+) cluster] + N(6)-octanoyl-L-lysyl-[protein] + 2 oxidized [2Fe-2S]-[ferredoxin] + 2 S-adenosyl-L-methionine + 4 H(+) = [[Fe-S] cluster scaffold protein] + N(6)-[(R)-dihydrolipoyl]-L-lysyl-[protein] + 4 Fe(3+) + 2 hydrogen sulfide + 2 5'-deoxyadenosine + 2 L-methionine + 2 reduced [2Fe-2S]-[ferredoxin]. The protein operates within protein modification; protein lipoylation via endogenous pathway; protein N(6)-(lipoyl)lysine from octanoyl-[acyl-carrier-protein]: step 2/2. Catalyzes the radical-mediated insertion of two sulfur atoms into the C-6 and C-8 positions of the octanoyl moiety bound to the lipoyl domains of lipoate-dependent enzymes, thereby converting the octanoylated domains into lipoylated derivatives. The chain is Lipoyl synthase from Bartonella henselae (strain ATCC 49882 / DSM 28221 / CCUG 30454 / Houston 1) (Rochalimaea henselae).